An 82-amino-acid chain; its full sequence is UPF0335 protein pRhico085 (82 aa).

This sequence belongs to the UPF0335 family.

The chain is UPF0335 protein pRhico085 from Azospirillum brasilense.